We begin with the raw amino-acid sequence, 896 residues long: FHIP family protein C05D11.8 (896 aa).

Positions 823–865 are disordered; it reads STASSPRTSDDHDPTLFYGRSTMAPPGRKPLLREPSRQETLDD. Over residues 853-865 the composition is skewed to basic and acidic residues; it reads LLREPSRQETLDD.

This sequence belongs to the FHIP family.

The polypeptide is FHIP family protein C05D11.8 (Caenorhabditis elegans).